The chain runs to 156 residues: Large ribosomal subunit protein uL22 (156 aa).

The tract at residues 114-156 (VESRPKQEKGGKAGASKASSRAARAQGSKAAAAKKTESKGGTS) is disordered. The segment covering 127–146 (GASKASSRAARAQGSKAAAA) has biased composition (low complexity). Positions 147–156 (KKTESKGGTS) are enriched in basic and acidic residues.

This sequence belongs to the universal ribosomal protein uL22 family. As to quaternary structure, part of the 50S ribosomal subunit.

In terms of biological role, this protein binds specifically to 23S rRNA; its binding is stimulated by other ribosomal proteins, e.g. L4, L17, and L20. It is important during the early stages of 50S assembly. It makes multiple contacts with different domains of the 23S rRNA in the assembled 50S subunit and ribosome. The globular domain of the protein is located near the polypeptide exit tunnel on the outside of the subunit, while an extended beta-hairpin is found that lines the wall of the exit tunnel in the center of the 70S ribosome. In Mycobacteroides abscessus (strain ATCC 19977 / DSM 44196 / CCUG 20993 / CIP 104536 / JCM 13569 / NCTC 13031 / TMC 1543 / L948) (Mycobacterium abscessus), this protein is Large ribosomal subunit protein uL22.